Here is a 243-residue protein sequence, read N- to C-terminus: Probable transcriptional regulatory protein Athe_0816 (243 aa).

It belongs to the TACO1 family.

It localises to the cytoplasm. The polypeptide is Probable transcriptional regulatory protein Athe_0816 (Caldicellulosiruptor bescii (strain ATCC BAA-1888 / DSM 6725 / KCTC 15123 / Z-1320) (Anaerocellum thermophilum)).